The sequence spans 185 residues: UPF0200 protein TK1334 (185 aa).

7 to 14 (GMPGSGKS) contacts ATP.

Belongs to the UPF0200 family.

This Thermococcus kodakarensis (strain ATCC BAA-918 / JCM 12380 / KOD1) (Pyrococcus kodakaraensis (strain KOD1)) protein is UPF0200 protein TK1334.